Consider the following 102-residue polypeptide: Acid shock protein (102 aa).

The signal sequence occupies residues 1–21 (MKKVLALVVAAAMGLSSAAFA). Low complexity predominate over residues 22–41 (AETATTPAPTATTTKAAPAK). A propeptide spanning residues 22–58 (AETATTPAPTATTTKAAPAKTTHHKKQHKAAPAQKAQ) is cleaved from the precursor. Positions 22–102 (AETATTPAPT…PAKPAAQPAA (81 aa)) are disordered. Residues 80–90 (AAKKHARKHSH) show a composition bias toward basic residues. Over residues 91-102 (QQPAKPAAQPAA) the composition is skewed to low complexity.

It belongs to the Asr family. In terms of processing, proteolytic processing gives rise to the active protein.

The protein resides in the periplasm. Required for growth and/or survival at acidic conditions. The polypeptide is Acid shock protein (Escherichia coli O127:H6 (strain E2348/69 / EPEC)).